We begin with the raw amino-acid sequence, 214 residues long: Large ribosomal subunit protein uL16 (214 aa).

The protein belongs to the universal ribosomal protein uL16 family. As to quaternary structure, component of the large ribosomal subunit. Mature ribosomes consist of a small (40S) and a large (60S) subunit. The 40S subunit contains about 33 different proteins and 1 molecule of RNA (18S). The 60S subunit contains about 49 different proteins and 3 molecules of RNA (28S, 5.8S and 5S).

This chain is Large ribosomal subunit protein uL16 (rpl-10L), found in Caenorhabditis elegans.